Consider the following 263-residue polypeptide: 3-methyl-2-oxobutanoate hydroxymethyltransferase (263 aa).

2 residues coordinate Mg(2+): Asp45 and Asp84. Residues 45-46 (DS), Asp84, and Lys112 contribute to the 3-methyl-2-oxobutanoate site. Glu114 serves as a coordination point for Mg(2+). Catalysis depends on Glu180, which acts as the Proton acceptor.

This sequence belongs to the PanB family. Homodecamer; pentamer of dimers. Requires Mg(2+) as cofactor.

It is found in the cytoplasm. The enzyme catalyses 3-methyl-2-oxobutanoate + (6R)-5,10-methylene-5,6,7,8-tetrahydrofolate + H2O = 2-dehydropantoate + (6S)-5,6,7,8-tetrahydrofolate. The protein operates within cofactor biosynthesis; (R)-pantothenate biosynthesis; (R)-pantoate from 3-methyl-2-oxobutanoate: step 1/2. Functionally, catalyzes the reversible reaction in which hydroxymethyl group from 5,10-methylenetetrahydrofolate is transferred onto alpha-ketoisovalerate to form ketopantoate. The sequence is that of 3-methyl-2-oxobutanoate hydroxymethyltransferase from Salmonella paratyphi C (strain RKS4594).